The following is a 352-amino-acid chain: Glycerol-3-phosphate dehydrogenase [NAD(P)+] (352 aa).

Trp-11, Arg-37, and Lys-112 together coordinate NADPH. Sn-glycerol 3-phosphate contacts are provided by Lys-112, Gly-153, and Ser-155. Position 157 (Ala-157) interacts with NADPH. Positions 208, 261, 271, 272, and 273 each coordinate sn-glycerol 3-phosphate. The Proton acceptor role is filled by Lys-208. Residue Arg-272 participates in NADPH binding. NADPH-binding residues include Val-296 and Glu-298.

It belongs to the NAD-dependent glycerol-3-phosphate dehydrogenase family.

The protein resides in the cytoplasm. It catalyses the reaction sn-glycerol 3-phosphate + NAD(+) = dihydroxyacetone phosphate + NADH + H(+). The catalysed reaction is sn-glycerol 3-phosphate + NADP(+) = dihydroxyacetone phosphate + NADPH + H(+). It participates in membrane lipid metabolism; glycerophospholipid metabolism. In terms of biological role, catalyzes the reduction of the glycolytic intermediate dihydroxyacetone phosphate (DHAP) to sn-glycerol 3-phosphate (G3P), the key precursor for phospholipid synthesis. The sequence is that of Glycerol-3-phosphate dehydrogenase [NAD(P)+] from Polaromonas naphthalenivorans (strain CJ2).